A 226-amino-acid polypeptide reads, in one-letter code: 7-cyano-7-deazaguanine synthase (226 aa).

12-22 (LSGGLDSATVV) contributes to the ATP binding site. Cys-191, Cys-201, Cys-204, and Cys-207 together coordinate Zn(2+).

Belongs to the QueC family. Zn(2+) is required as a cofactor.

The catalysed reaction is 7-carboxy-7-deazaguanine + NH4(+) + ATP = 7-cyano-7-deazaguanine + ADP + phosphate + H2O + H(+). The protein operates within purine metabolism; 7-cyano-7-deazaguanine biosynthesis. Catalyzes the ATP-dependent conversion of 7-carboxy-7-deazaguanine (CDG) to 7-cyano-7-deazaguanine (preQ(0)). This is 7-cyano-7-deazaguanine synthase from Pseudomonas syringae pv. tomato (strain ATCC BAA-871 / DC3000).